Consider the following 236-residue polypeptide: UPF0502 protein BceJ2315_62050 (236 aa).

This sequence belongs to the UPF0502 family.

The protein is UPF0502 protein BceJ2315_62050 of Burkholderia cenocepacia (strain ATCC BAA-245 / DSM 16553 / LMG 16656 / NCTC 13227 / J2315 / CF5610) (Burkholderia cepacia (strain J2315)).